The primary structure comprises 62 residues: Large ribosomal subunit protein uL30 (62 aa).

The protein belongs to the universal ribosomal protein uL30 family. In terms of assembly, part of the 50S ribosomal subunit.

The polypeptide is Large ribosomal subunit protein uL30 (Geobacillus kaustophilus (strain HTA426)).